A 117-amino-acid chain; its full sequence is MDLEELQKIIQEEQIRCEREIAEAAEARNSSNSLIVVDEYSKESEDVLENGLEHVQSNEFTESEDYKSIERSLAVTEAVMARFEKEMGSLRDQMNFFHQILDNDNLDGFLTGSSKPC.

The protein resides in the cytoplasm. It is found in the nucleus. This is an uncharacterized protein from Schizosaccharomyces pombe (strain 972 / ATCC 24843) (Fission yeast).